The sequence spans 292 residues: ATP synthase gamma chain (292 aa).

It belongs to the ATPase gamma chain family. F-type ATPases have 2 components, CF(1) - the catalytic core - and CF(0) - the membrane proton channel. CF(1) has five subunits: alpha(3), beta(3), gamma(1), delta(1), epsilon(1). CF(0) has three main subunits: a, b and c.

It localises to the cell membrane. Its function is as follows. Produces ATP from ADP in the presence of a proton gradient across the membrane. The gamma chain is believed to be important in regulating ATPase activity and the flow of protons through the CF(0) complex. In Streptococcus mutans serotype c (strain ATCC 700610 / UA159), this protein is ATP synthase gamma chain.